The sequence spans 421 residues: Anhydromevalonate phosphate decarboxylase (421 aa).

Residues asparagine 131 and glutamate 194 each coordinate Mn(2+). Catalysis depends on aspartate 240, which acts as the Proton acceptor.

The protein belongs to the UbiD family. Prenylated FMN serves as cofactor. The cofactor is Mn(2+).

It catalyses the reaction (2E)-3-methyl-5-phosphooxypent-2-enoate + H(+) = isopentenyl phosphate + CO2. Its pathway is isoprenoid biosynthesis; isopentenyl diphosphate biosynthesis via mevalonate pathway. Functionally, catalyzes the conversion of trans-anhydromevalonate 5-phosphate (tAHMP) into isopentenyl phosphate. Involved in the archaeal mevalonate (MVA) pathway, which provides fundamental precursors for isoprenoid biosynthesis, such as isopentenyl diphosphate (IPP) and dimethylallyl diphosphate (DMAPP). The protein is Anhydromevalonate phosphate decarboxylase of Methanocaldococcus jannaschii (strain ATCC 43067 / DSM 2661 / JAL-1 / JCM 10045 / NBRC 100440) (Methanococcus jannaschii).